Here is a 145-residue protein sequence, read N- to C-terminus: MAQKQTPSGPTQRQQRVAELIRHALAEVLQRGDIQDPVLGSHVVTVPEVRMSPDLKLATAYVMPLGGQDEAPVIAALERHKKILRQEVARRVNLKFAPDLRFRRDETFDEAARIDQLLRSEKVQRDLESAPREDDEGEPDSSSRD.

The span at 122 to 132 shows a compositional bias: basic and acidic residues; that stretch reads KVQRDLESAPR. Positions 122–145 are disordered; the sequence is KVQRDLESAPREDDEGEPDSSSRD.

It belongs to the RbfA family. Monomer. Binds 30S ribosomal subunits, but not 50S ribosomal subunits or 70S ribosomes.

Its subcellular location is the cytoplasm. In terms of biological role, one of several proteins that assist in the late maturation steps of the functional core of the 30S ribosomal subunit. Associates with free 30S ribosomal subunits (but not with 30S subunits that are part of 70S ribosomes or polysomes). Required for efficient processing of 16S rRNA. May interact with the 5'-terminal helix region of 16S rRNA. The chain is Ribosome-binding factor A from Methylorubrum extorquens (strain PA1) (Methylobacterium extorquens).